Here is a 187-residue protein sequence, read N- to C-terminus: F-box protein At5g41720 (187 aa).

The F-box domain occupies 2 to 49 (MMNSPLDYDVLLEIMSYCPATEMAKFRLLSKECNKRSYEMSFINRHLH).

The polypeptide is F-box protein At5g41720 (Arabidopsis thaliana (Mouse-ear cress)).